The primary structure comprises 43 residues: Pre-protein VI (43 aa).

The propeptide occupies Met1–Gly33.

Belongs to the adenoviridae protein VI family. Interacts with hexon protein; this interaction allows nuclear import of hexon trimers and possibly pre-capsid assembly. Interacts (via C-terminal NLS) with importin alpha/beta. In terms of assembly, interacts (via PPxY motif) with host NEDD4 ubiquitine ligase; this interaction might play a role in virus intracellular transport during entry. Part of a complex composed of the core-capsid bridging protein, the endosome lysis protein VI and the hexon-linking protein VIII; these interactions bridge the virus core to the capsid. Interacts with peripentonal hexons; this interaction stabilizes the capsid by gluing two peripentonal hexons together and joining them with an adjacent group-of-nine hexon. Protease cofactor: Heterodimer with the viral protease; disulfide-linked. Interacts with the viral protease. In terms of processing, ubiquitinated by Nedd4 following partial capsid disassembly; which might play a role in intracellular virus movement during entry. Post-translationally, protease cofactor: Contains the major nuclear import and export signals. Proteolytically removed during virion maturation. The processing of the C-terminus turns the precursor into a mature viral structural protein and abrogates its ability to promote hexon import and act as a potential chaperone protein.

The protein localises to the host nucleus. It localises to the host cytoplasm. Its subcellular location is the virion. Functionally, during virus assembly, promotes hexon trimers nuclear import through nuclear pore complexes via an importin alpha/beta-dependent mechanism. By analogy to herpesviruses capsid assembly, might act as a chaperone to promote the formation of the icosahedral capsid. Structural component of the virion that provides increased stability to the particle shell through its interaction with the core-capsid bridging protein and the hexon-linking protein VIII. Fibers shedding during virus entry into host cell allows the endosome lysis protein to be exposed as a membrane-lytic peptide. Exhibits pH-independent membrane fragmentation activity and probably mediates viral rapid escape from host endosome via organellar membrane lysis. It is not clear if it then remains partially associated with the capsid and involved in the intracellular microtubule-dependent transport of capsid to the nucleus, or if it is lost during endosomal penetration. This is Pre-protein VI from Bovine adenovirus 2 (BAdV-2).